We begin with the raw amino-acid sequence, 393 residues long: Protein TsgA (393 aa).

The Cytoplasmic portion of the chain corresponds to 1–10 (MTNSNRIKLT). Residues 11 to 31 (WISFLSYALTGALVIVTGMVM) form a helical membrane-spanning segment. Topologically, residues 32–50 (GNIADYFHLPVSSMSNTFT) are periplasmic. The chain crosses the membrane as a helical span at residues 51 to 71 (FLNAGILISIFLNAWLMEIVP). At 72-77 (LKTQLR) the chain is on the cytoplasmic side. Residues 78 to 98 (FGFILMVLAVAGLMFSHSLAL) form a helical membrane-spanning segment. Over 99–100 (FS) the chain is Periplasmic. The helical transmembrane segment at 101 to 121 (AAMFVLGLVSGITMSIGTFLI) threads the bilayer. At 122–133 (TQLYEGRQRGSR) the chain is on the cytoplasmic side. The helical transmembrane segment at 134-154 (LLFTDSFFSMAGMIFPMVAAF) threads the bilayer. At 155–161 (LLARSIE) the chain is on the periplasmic side. The helical transmembrane segment at 162 to 182 (WYWVYACIGLVYLAIFILTFG) threads the bilayer. The Cytoplasmic portion of the chain corresponds to 183–205 (CEFPALGKHAQHSQAPVVKEKWG). A helical transmembrane segment spans residues 206–226 (IGVLFLAVAALCYILGQLGFI). The Periplasmic segment spans residues 227-244 (SWVPEYAKGLGMSLNDAG). The chain crosses the membrane as a helical span at residues 245 to 265 (ALVSDFWMSYMFGMWAFSFIL). The Cytoplasmic segment spans residues 266–272 (RFFDLQR). Residues 273–293 (ILTVLAGMAAVLMYLFITGTQ) form a helical membrane-spanning segment. Topologically, residues 294 to 297 (AHMP) are periplasmic. A helical membrane pass occupies residues 298–318 (WFILTLGFFSSAIYTSIITLG). Over 319 to 331 (SQQTKVASPKLVN) the chain is Cytoplasmic. The helical transmembrane segment at 332–352 (FILTCGTIGTMLTFVVTGPIV) threads the bilayer. Residues 353–360 (AHSGPQAA) lie on the Periplasmic side of the membrane. A helical transmembrane segment spans residues 361 to 381 (LLTANGLYAVVFVMCFALGFV). Residues 382-393 (SRHRQHSSPAAH) lie on the Cytoplasmic side of the membrane.

This sequence belongs to the major facilitator superfamily. TsgA family.

The protein localises to the cell inner membrane. In Salmonella paratyphi A (strain ATCC 9150 / SARB42), this protein is Protein TsgA.